The primary structure comprises 370 residues: 3-dehydroquinate synthase (370 aa).

NAD(+) is bound by residues 108–112 (GVIGD), 132–133 (TT), Lys145, and Lys154. Zn(2+) is bound by residues Glu187, His249, and His267.

Belongs to the sugar phosphate cyclases superfamily. Dehydroquinate synthase family. Co(2+) is required as a cofactor. It depends on Zn(2+) as a cofactor. NAD(+) serves as cofactor.

Its subcellular location is the cytoplasm. The enzyme catalyses 7-phospho-2-dehydro-3-deoxy-D-arabino-heptonate = 3-dehydroquinate + phosphate. Its pathway is metabolic intermediate biosynthesis; chorismate biosynthesis; chorismate from D-erythrose 4-phosphate and phosphoenolpyruvate: step 2/7. Functionally, catalyzes the conversion of 3-deoxy-D-arabino-heptulosonate 7-phosphate (DAHP) to dehydroquinate (DHQ). This chain is 3-dehydroquinate synthase, found in Cereibacter sphaeroides (strain KD131 / KCTC 12085) (Rhodobacter sphaeroides).